The primary structure comprises 303 residues: Foldase protein PrsA (303 aa).

The first 20 residues, 1–20 (MMKKWLLAAASLLMVVTLAG), serve as a signal peptide directing secretion. Cys-21 is lipidated: N-palmitoyl cysteine. Cys-21 carries the S-diacylglycerol cysteine lipid modification. One can recognise a PpiC domain in the interval 137-233 (EPKVEVQHIL…YGYHVIRMIK (97 aa)).

This sequence belongs to the PrsA family.

It is found in the cell membrane. It carries out the reaction [protein]-peptidylproline (omega=180) = [protein]-peptidylproline (omega=0). Functionally, plays a major role in protein secretion by helping the post-translocational extracellular folding of several secreted proteins. The polypeptide is Foldase protein PrsA (Latilactobacillus sakei subsp. sakei (strain 23K) (Lactobacillus sakei subsp. sakei)).